The chain runs to 238 residues: Cadherin-2 (238 aa).

Cadherin domains lie at 1-46, 47-161, and 162-238; these read TKPL…RPEF, LHQV…PPEF, and TAMT…RMFV. Topologically, residues 1–238 are extracellular; it reads TKPLDRELIA…IDFETNRMFV (238 aa). Residues D5, E7, D38, M39, N40, D41, and N42 each contribute to the Ca(2+) site. N52 is a glycosylation site (N-linked (GlcNAc...) asparagine). Ca(2+)-binding residues include D72, D74, and N80. An N-linked (GlcNAc...) asparagine glycan is attached at N104. D132 serves as a coordination point for Ca(2+). N181 is a glycosylation site (N-linked (GlcNAc...) asparagine).

In terms of assembly, homodimer (via extracellular region). Can also form heterodimers with other cadherins (via extracellular region). Dimerization occurs in trans, i.e. with a cadherin chain from another cell. Interacts with CDCP1. Interacts with PCDH8; this complex may also include TAOK2. The interaction with PCDH8 may lead to internalization through TAOK2/p38 MAPK pathway. Identified in a complex containing FGFR4, NCAM1, CDH2, PLCG1, FRS2, SRC, SHC1, GAP43 and CTTN. May interact with OBSCN (via protein kinase domain 2). Post-translationally, cleaved by MMP24. Ectodomain cleavage leads to the generation of a soluble 90 kDa N-terminal soluble fragment and a 45 kDa membrane-bound C-terminal fragment 1 (CTF1), which is further cleaved by gamma-secretase into a 35 kDa. Cleavage in neural stem cells by MMP24 affects CDH2-mediated anchorage of neural stem cells to ependymocytes in the adult subependymal zone, leading to modulate neural stem cell quiescence. In terms of processing, may be phosphorylated by OBSCN.

It localises to the cell membrane. It is found in the sarcolemma. Its subcellular location is the cell junction. The protein resides in the cell surface. The protein localises to the desmosome. It localises to the adherens junction. Its function is as follows. Calcium-dependent cell adhesion protein; preferentially mediates homotypic cell-cell adhesion by dimerization with a CDH2 chain from another cell. Cadherins may thus contribute to the sorting of heterogeneous cell types. Acts as a regulator of neural stem cells quiescence by mediating anchorage of neural stem cells to ependymocytes in the adult subependymal zone: upon cleavage by MMP24, CDH2-mediated anchorage is affected, leading to modulate neural stem cell quiescence. Plays a role in cell-to-cell junction formation between pancreatic beta cells and neural crest stem (NCS) cells, promoting the formation of processes by NCS cells. Required for proper neurite branching. Required for pre- and postsynaptic organization. CDH2 may be involved in neuronal recognition mechanism. In hippocampal neurons, may regulate dendritic spine density. This is Cadherin-2 (CDH2) from Cricetulus griseus (Chinese hamster).